A 118-amino-acid polypeptide reads, in one-letter code: Ribonuclease P protein component (118 aa).

This sequence belongs to the RnpA family. As to quaternary structure, consists of a catalytic RNA component (M1 or rnpB) and a protein subunit.

It catalyses the reaction Endonucleolytic cleavage of RNA, removing 5'-extranucleotides from tRNA precursor.. Functionally, RNaseP catalyzes the removal of the 5'-leader sequence from pre-tRNA to produce the mature 5'-terminus. It can also cleave other RNA substrates such as 4.5S RNA. The protein component plays an auxiliary but essential role in vivo by binding to the 5'-leader sequence and broadening the substrate specificity of the ribozyme. The chain is Ribonuclease P protein component from Rickettsia akari (strain Hartford).